The following is a 211-amino-acid chain: Stromal cell-derived factor 2 (211 aa).

A signal peptide spans Met-1 to Ser-18. MIR domains follow at residues Leu-21–Lys-75, Gly-83–Asn-138, and Gly-139–Gly-193.

The protein localises to the secreted. The chain is Stromal cell-derived factor 2 (SDF2) from Bos taurus (Bovine).